The primary structure comprises 264 residues: Thiazole synthase (264 aa).

The Schiff-base intermediate with DXP role is filled by Lys98. 1-deoxy-D-xylulose 5-phosphate contacts are provided by residues Gly159, 185–186 (AG), and 207–208 (AT).

It belongs to the ThiG family. As to quaternary structure, homotetramer. Forms heterodimers with either ThiH or ThiS.

The protein resides in the cytoplasm. The enzyme catalyses [ThiS sulfur-carrier protein]-C-terminal-Gly-aminoethanethioate + 2-iminoacetate + 1-deoxy-D-xylulose 5-phosphate = [ThiS sulfur-carrier protein]-C-terminal Gly-Gly + 2-[(2R,5Z)-2-carboxy-4-methylthiazol-5(2H)-ylidene]ethyl phosphate + 2 H2O + H(+). Its pathway is cofactor biosynthesis; thiamine diphosphate biosynthesis. Catalyzes the rearrangement of 1-deoxy-D-xylulose 5-phosphate (DXP) to produce the thiazole phosphate moiety of thiamine. Sulfur is provided by the thiocarboxylate moiety of the carrier protein ThiS. In vitro, sulfur can be provided by H(2)S. The protein is Thiazole synthase of Mycobacterium ulcerans (strain Agy99).